The sequence spans 445 residues: Inward rectifier potassium channel 4 (445 aa).

Residues 1–55 (MHGHSRNGQAHVPRRKRRNRFVKKNGQCNVYFANLSNKSQRYMADIFTTCVDTRW) lie on the Cytoplasmic side of the membrane. Residues 56–80 (RYMLMIFSAAFLVSWLFFGLLFWCI) form a helical membrane-spanning segment. Residues 81-120 (AFFHGDLEASPGVPAAGGPAAGGGGAAPVAPKPCIMHVNG) lie on the Extracellular side of the membrane. Residues 91 to 111 (PGVPAAGGPAAGGGGAAPVAP) form a val/Gly/Ala/Pro stretch region. The segment at residues 121-132 (FLGAFLFSVETQ) is an intramembrane region (helical; Pore-forming). The segment at residues 133–139 (TTIGYGF) is an intramembrane region (pore-forming). A Selectivity filter motif is present at residues 134–139 (TIGYGF). At 140–148 (RCVTEECPL) the chain is on the extracellular side. Residues 149–170 (AVIAVVVQSIVGCVIDSFMIGT) form a helical membrane-spanning segment. Topologically, residues 171-445 (IMAKMARPKK…NISYRRESAI (275 aa)) are cytoplasmic. Positions 443–445 (SAI) match the PDZ-binding motif.

It belongs to the inward rectifier-type potassium channel (TC 1.A.2.1) family. KCNJ4 subfamily. As to quaternary structure, homomultimeric and heteromultimeric association with KCNJ2 and KCNJ12. Interacts with DLG2 and DLG4. Associates, via its PDZ-recognition domain, with a complex containing LIN7A, LIN7B, LIN7C, DLG1, CASK and APBA1. Interacts with TAX1BP3. TAX1BP3 competes with LIN7 family members for KCNJ4 binding. In terms of tissue distribution, heart, skeletal muscle, and several different brain regions including the hippocampus.

Its subcellular location is the cell membrane. The protein resides in the postsynaptic cell membrane. The protein localises to the cytoplasmic vesicle membrane. It catalyses the reaction K(+)(in) = K(+)(out). In terms of biological role, inward rectifier potassium channels are characterized by a greater tendency to allow potassium to flow into the cell rather than out of it. Their voltage dependence is regulated by the concentration of extracellular potassium; as external potassium is raised, the voltage range of the channel opening shifts to more positive voltages. The inward rectification is mainly due to the blockage of outward current by internal magnesium. Can be blocked by extracellular barium and cesium. This chain is Inward rectifier potassium channel 4 (KCNJ4), found in Homo sapiens (Human).